We begin with the raw amino-acid sequence, 600 residues long: MNCYKTHTCNELRKNDVEKEVTLSGWLYRKRDHGNLIFVDLRDFYGITQLVFNNDKDFFDEISNLKLESVITVTGIVEARTEDTVNSSISTGEIEVIVNNLRVESEVEFHFDEEIAKEERSILASITGEQEYPENMRFKYRFLDLRREKVRNNIILRSQIIAELRKLMIERGFLEIQTPILTASSPEGARDYLVPSRLNPGKFYALPQAPQIFKQLLMVSGFDKYFQIAPCFRDEDARADRSPGEFYQLDLEMSFVTQEDIFQIIESTLYRVFAKFSRKSVDKDFPRITYKEAMLKYGSDKPDLRNPLLISDVTEIFRDSGFNIFKSNIERGMVVRAIPAPKTAEEPRSFFDKKIEHAQKEFGAKGLGYITFDKDGTAKGPIAKFLDENRLNHIREATNIEPGDSVFFASDKENEAANIAGKVRTLLGSELSLIDDNIFKFCWIIDFPYFVYDDKSKKIDFFHNPFSMPHGGLKDLEDKNPLDILAYQYDLVCNGIELSSGAIRNNKLDIMYKAFAIAGYSRGEVDTRFGALVRAFRFGVPPHGGIAPGVDRIVMLLADEPNIREVICFPMNQQGEDVLMGAPSKVEDKHLRELSLKVIE.

Glutamate 187 is an L-aspartate binding site. An aspartate region spans residues 211–214 (QIFK). L-aspartate-binding residues include arginine 233 and histidine 463. ATP is bound at residue 233–235 (RDE). Glutamate 497 contacts ATP. Residue arginine 504 participates in L-aspartate binding. Position 549-552 (549-552 (GVDR)) interacts with ATP.

Belongs to the class-II aminoacyl-tRNA synthetase family. Type 1 subfamily. Homodimer.

It localises to the cytoplasm. It catalyses the reaction tRNA(Asx) + L-aspartate + ATP = L-aspartyl-tRNA(Asx) + AMP + diphosphate. Aspartyl-tRNA synthetase with relaxed tRNA specificity since it is able to aspartylate not only its cognate tRNA(Asp) but also tRNA(Asn). Reaction proceeds in two steps: L-aspartate is first activated by ATP to form Asp-AMP and then transferred to the acceptor end of tRNA(Asp/Asn). The polypeptide is Aspartate--tRNA(Asp/Asn) ligase (Wolbachia sp. subsp. Drosophila simulans (strain wRi)).